A 189-amino-acid chain; its full sequence is Large ribosomal subunit protein bL9 (189 aa).

Belongs to the bacterial ribosomal protein bL9 family.

In terms of biological role, binds to the 23S rRNA. The chain is Large ribosomal subunit protein bL9 from Methylobacterium nodulans (strain LMG 21967 / CNCM I-2342 / ORS 2060).